Consider the following 479-residue polypeptide: Glutamyl-tRNA(Gln) amidotransferase subunit A (479 aa).

Catalysis depends on charge relay system residues K71 and S146. The Acyl-ester intermediate role is filled by S170.

This sequence belongs to the amidase family. GatA subfamily. As to quaternary structure, heterotrimer of A, B and C subunits.

The enzyme catalyses L-glutamyl-tRNA(Gln) + L-glutamine + ATP + H2O = L-glutaminyl-tRNA(Gln) + L-glutamate + ADP + phosphate + H(+). Allows the formation of correctly charged Gln-tRNA(Gln) through the transamidation of misacylated Glu-tRNA(Gln) in organisms which lack glutaminyl-tRNA synthetase. The reaction takes place in the presence of glutamine and ATP through an activated gamma-phospho-Glu-tRNA(Gln). The polypeptide is Glutamyl-tRNA(Gln) amidotransferase subunit A (Lactobacillus gasseri (strain ATCC 33323 / DSM 20243 / BCRC 14619 / CIP 102991 / JCM 1131 / KCTC 3163 / NCIMB 11718 / NCTC 13722 / AM63)).